The sequence spans 467 residues: Serine/threonine-protein phosphatase 2A 56 kDa regulatory subunit epsilon isoform (467 aa).

A disordered region spans residues M1 to Q39. At S2 the chain carries N-acetylserine. T7 bears the Phosphothreonine mark. A compositionally biased stretch (basic residues) spans K20 to R29. Residues S30, S32, and S34 each carry the phosphoserine modification. A compositionally biased stretch (low complexity) spans S30–Q39.

It belongs to the phosphatase 2A regulatory subunit B56 family. PP2A consists of a common heterodimeric core enzyme, composed of a 36 kDa catalytic subunit (subunit C) and a 65 kDa constant regulatory subunit (PR65 or subunit A), that associates with a variety of regulatory subunits. Proteins that associate with the core dimer include three families of regulatory subunits B (the R2/B/PR55/B55, R3/B''/PR72/PR130/PR59 and R5/B'/B56 families), the 48 kDa variable regulatory subunit, viral proteins, and cell signaling molecules. Interacts with SGO1. Found in a complex with at least ARL2, PPP2CB; PPP2R1A, PPP2R2A, PPP2R5E and TBCD.

It localises to the cytoplasm. The B regulatory subunit might modulate substrate selectivity and catalytic activity, and might also direct the localization of the catalytic enzyme to a particular subcellular compartment. Interacts with cyclin G in vitro. The polypeptide is Serine/threonine-protein phosphatase 2A 56 kDa regulatory subunit epsilon isoform (Ppp2r5e) (Mus musculus (Mouse)).